The chain runs to 114 residues: Large ribosomal subunit protein uL22 (114 aa).

This sequence belongs to the universal ribosomal protein uL22 family. As to quaternary structure, part of the 50S ribosomal subunit.

This protein binds specifically to 23S rRNA; its binding is stimulated by other ribosomal proteins, e.g. L4, L17, and L20. It is important during the early stages of 50S assembly. It makes multiple contacts with different domains of the 23S rRNA in the assembled 50S subunit and ribosome. Its function is as follows. The globular domain of the protein is located near the polypeptide exit tunnel on the outside of the subunit, while an extended beta-hairpin is found that lines the wall of the exit tunnel in the center of the 70S ribosome. The sequence is that of Large ribosomal subunit protein uL22 from Bacillus licheniformis (strain ATCC 14580 / DSM 13 / JCM 2505 / CCUG 7422 / NBRC 12200 / NCIMB 9375 / NCTC 10341 / NRRL NRS-1264 / Gibson 46).